A 530-amino-acid polypeptide reads, in one-letter code: MNFEQYESAYPPRALPPGAWVTRIGPSPTGKAHIGTALQAVINRSLADGSGGAFLLRIEDTDRERFVEGAIEDLLAALDWLGIRPDESVAHGGAYGPYVQSERLPIYQAAARQLVEVGHAYYCFCTPERLESVRMAQQAAGKPTMYDRHCRNLGREEVEKRLATGEKAVVRLKVPDGTEIAFDDLARGRIAFESQTIDDSVLLKSDGFPTYHLAVVVDDHLMRVNQIIRGEEWIPSTPKHVLLYQYFGWPMPRIAHTPILRDMSRRKLSKRSGDTSITGYRVQGYLPEGLRNFLTRIIWPHPEGKDVYDHEEFVRLFKAEDLPNTGPIVDPQLLDFINGQYLRRLSSAELYTATVEYLKFLLGLHQDIIFETYHPSAPIKQTLTRAELGSFYSAFTANPTYTERVLTLEPERYKRLSDIVVSTGFFFPALFTPADPKLLAKPLGSPEKAGALLGEYLRLYRPDAAQAEWEQSVRELAHEAGVKDGKLFMTLRVAVTGREQTPPLFEVLTILGGDEVQRRLELAAAMPVSL.

Positions 26–36 (PSPTGKAHIGT) match the 'HIGH' region motif. Residues 267-271 (KLSKR) carry the 'KMSKS' region motif. Lys270 is a binding site for ATP.

Belongs to the class-I aminoacyl-tRNA synthetase family. Glutamate--tRNA ligase type 1 subfamily. Monomer.

It is found in the cytoplasm. It carries out the reaction tRNA(Glu) + L-glutamate + ATP = L-glutamyl-tRNA(Glu) + AMP + diphosphate. Its function is as follows. Catalyzes the attachment of glutamate to tRNA(Glu) in a two-step reaction: glutamate is first activated by ATP to form Glu-AMP and then transferred to the acceptor end of tRNA(Glu). The sequence is that of Glutamate--tRNA ligase from Gloeobacter violaceus (strain ATCC 29082 / PCC 7421).